We begin with the raw amino-acid sequence, 423 residues long: MLNLKFIIENIEKVIEKLNTRTGDFSYLNKLLVLNIKKKKLIFNIETLRYQQNKISKEISILKQNKTNTENIFERSIFLKNEIHVLENDFKKTDSEISEILNNIPNLPHESVILLSKDNNKINFKKYLSPKKFNFNIKDHVTLGRNLNILDFDRASKITGSRFIVYKGLGARLERSLIQFMMDLHSEKGYIEIIPPFIVNDISMFSTGQLPKFKNDSYRLENSNNWYLNPTGEVPAINLHRNEVLSQKNLPLNYVVFTTCFRQEAGTAGKDTRGILRQHQFNKVELIKFTEPQDSYLELENMLQDAESVLQKLELPYRVIMLPSHELGFSASKTYDIEVWLPGSNNYREISSISNTESFQSLRANIKFYSKNKGKNKYVHTLNGSGLAIGRTLIAILENYQNKDGTITVPKVLRSYMRTDIIK.

An L-serine-binding site is contributed by 231–233 (TGE). 262 to 264 (RQE) provides a ligand contact to ATP. Glu-285 is an L-serine binding site. An ATP-binding site is contributed by 349–352 (EISS). Ser-385 lines the L-serine pocket.

It belongs to the class-II aminoacyl-tRNA synthetase family. Type-1 seryl-tRNA synthetase subfamily. In terms of assembly, homodimer. The tRNA molecule binds across the dimer.

It is found in the cytoplasm. It carries out the reaction tRNA(Ser) + L-serine + ATP = L-seryl-tRNA(Ser) + AMP + diphosphate + H(+). It catalyses the reaction tRNA(Sec) + L-serine + ATP = L-seryl-tRNA(Sec) + AMP + diphosphate + H(+). It participates in aminoacyl-tRNA biosynthesis; selenocysteinyl-tRNA(Sec) biosynthesis; L-seryl-tRNA(Sec) from L-serine and tRNA(Sec): step 1/1. Catalyzes the attachment of serine to tRNA(Ser). Is also able to aminoacylate tRNA(Sec) with serine, to form the misacylated tRNA L-seryl-tRNA(Sec), which will be further converted into selenocysteinyl-tRNA(Sec). The chain is Serine--tRNA ligase from Phytoplasma mali (strain AT).